The following is a 168-amino-acid chain: Shikimate kinase (168 aa).

10-15 (GVGKTT) is an ATP binding site. Thr-14 contributes to the Mg(2+) binding site. Positions 32, 56, and 77 each coordinate substrate. Arg-115 contributes to the ATP binding site. Residue Arg-133 participates in substrate binding.

This sequence belongs to the shikimate kinase family. Monomer. Requires Mg(2+) as cofactor.

It localises to the cytoplasm. The catalysed reaction is shikimate + ATP = 3-phosphoshikimate + ADP + H(+). It functions in the pathway metabolic intermediate biosynthesis; chorismate biosynthesis; chorismate from D-erythrose 4-phosphate and phosphoenolpyruvate: step 5/7. Catalyzes the specific phosphorylation of the 3-hydroxyl group of shikimic acid using ATP as a cosubstrate. This is Shikimate kinase from Macrococcus caseolyticus (strain JCSC5402) (Macrococcoides caseolyticum).